A 45-amino-acid polypeptide reads, in one-letter code: GFEVIDNIKDSVVILGGPNWNVKMGDIRPLTGSNGEIRFDNNYFK.

The protein belongs to the peroxidase family. Classical plant (class III) peroxidase subfamily. The cofactor is heme b. Ca(2+) serves as cofactor.

It is found in the secreted. It catalyses the reaction 2 a phenolic donor + H2O2 = 2 a phenolic radical donor + 2 H2O. Its function is as follows. Removal of H(2)O(2), oxidation of toxic reductants, biosynthesis and degradation of lignin, suberization, auxin catabolism, response to environmental stresses such as wounding, pathogen attack and oxidative stress. These functions might be dependent on each isozyme/isoform in each plant tissue. The protein is Peroxidase 3 of Capsicum annuum (Capsicum pepper).